We begin with the raw amino-acid sequence, 393 residues long: Putative serpin-Z6A (393 aa).

The segment at 336–360 (GTEAAAATAVLMEGAARYAPPPPPR) is RCL.

It belongs to the serpin family.

Its function is as follows. Probable serine protease inhibitor. The sequence is that of Putative serpin-Z6A from Oryza sativa subsp. japonica (Rice).